The primary structure comprises 1397 residues: DNA-directed RNA polymerase subunit beta' (1397 aa).

The Zn(2+) site is built by Cys-75, Cys-77, Cys-90, and Cys-93. Mg(2+)-binding residues include Asp-465, Asp-467, and Asp-469. Positions 819, 893, 900, and 903 each coordinate Zn(2+).

Belongs to the RNA polymerase beta' chain family. In terms of assembly, the RNAP catalytic core consists of 2 alpha, 1 beta, 1 beta' and 1 omega subunit. When a sigma factor is associated with the core the holoenzyme is formed, which can initiate transcription. It depends on Mg(2+) as a cofactor. Zn(2+) serves as cofactor.

It catalyses the reaction RNA(n) + a ribonucleoside 5'-triphosphate = RNA(n+1) + diphosphate. In terms of biological role, DNA-dependent RNA polymerase catalyzes the transcription of DNA into RNA using the four ribonucleoside triphosphates as substrates. The protein is DNA-directed RNA polymerase subunit beta' of Acinetobacter baumannii (strain ACICU).